The primary structure comprises 479 residues: MNTILAQQIANEGGVEAWMIAQQHKSLLRFLTCGSVDDGKSTLIGRLLHDTLQIYEDQLSSLHNDSKRHGTQGEKLDLALLVDGLQAEREQGITIDVAYRYFSTEKRKFIIADTPGHEQYTRNMATGASTCDLAILLIDARKGVLDQTRRHSFISTLLGIKHLVVAINKMDLVGYREETFARIREDYLTFAEQLPGDLDIRFVPLSALEGDNVAAQSANMRWYSGPTLLEVLETVDIQRAVDRQPMRFPVQYVNRPNLDFRGYAGTLASGSVKVGERIKVLPSGVESSVARIVTFDGDKEEACAGEAITLVLNDDIDISRGDLLLAANETLAPARHAAIDVVWMAEQPLAPGQSYDVKLAGKKTRARIEAIRYQIDINNLTQRDVESLPLNGIGLVEMTFDEPLALDIYQQNPVTGGLIFIDRLSNVTVGAGMVRELDERGATPSVEYSAFELELNALVRRHFPHWDARDLLGDKHGAA.

Residues 25–239 (KSLLRFLTCG…EVLETVDIQR (215 aa)) enclose the tr-type G domain. Residues 34–41 (GSVDDGKS) are G1. 34 to 41 (GSVDDGKS) is a binding site for GTP. The segment at 92-96 (GITID) is G2. Positions 113 to 116 (DTPG) are G3. GTP-binding positions include 113–117 (DTPGH) and 168–171 (NKMD). Positions 168–171 (NKMD) are G4. Residues 206–208 (SAL) are G5.

It belongs to the TRAFAC class translation factor GTPase superfamily. Classic translation factor GTPase family. CysN/NodQ subfamily. As to quaternary structure, heterodimer composed of CysD, the smaller subunit, and CysN.

The catalysed reaction is sulfate + ATP + H(+) = adenosine 5'-phosphosulfate + diphosphate. It participates in sulfur metabolism; hydrogen sulfide biosynthesis; sulfite from sulfate: step 1/3. Its function is as follows. With CysD forms the ATP sulfurylase (ATPS) that catalyzes the adenylation of sulfate producing adenosine 5'-phosphosulfate (APS) and diphosphate, the first enzymatic step in sulfur assimilation pathway. APS synthesis involves the formation of a high-energy phosphoric-sulfuric acid anhydride bond driven by GTP hydrolysis by CysN coupled to ATP hydrolysis by CysD. In Salmonella choleraesuis (strain SC-B67), this protein is Sulfate adenylyltransferase subunit 1.